A 111-amino-acid polypeptide reads, in one-letter code: Nucleoid-associated protein PFL_1905 (111 aa).

Disordered regions lie at residues 1–20 (MKGGMAGLMKQAQQMQEKMA) and 88–111 (SNSQEKMSGMTAGMQLPPGMKLPF).

The protein belongs to the YbaB/EbfC family. In terms of assembly, homodimer.

The protein resides in the cytoplasm. It localises to the nucleoid. In terms of biological role, binds to DNA and alters its conformation. May be involved in regulation of gene expression, nucleoid organization and DNA protection. The chain is Nucleoid-associated protein PFL_1905 from Pseudomonas fluorescens (strain ATCC BAA-477 / NRRL B-23932 / Pf-5).